A 423-amino-acid polypeptide reads, in one-letter code: UPF0229 protein Pmen_4018 (423 aa).

The disordered stretch occupies residues 65-108; it reads HHGRGGKQTIVHPGNKEFTAGERIPRPQGGGGGRGSGKASNSGE.

The protein belongs to the UPF0229 family.

The sequence is that of UPF0229 protein Pmen_4018 from Ectopseudomonas mendocina (strain ymp) (Pseudomonas mendocina).